The following is a 234-amino-acid chain: Transcriptional regulatory protein CseB (234 aa).

The Response regulatory domain maps to 6-119; that stretch reads HVLFVEDDDV…VLVARIRAVL (114 aa). D55 is modified (4-aspartylphosphate). The ompR/PhoB-type DNA-binding region spans 140-234; that stretch reads GGVLTFGDLE…VRGFGYKLKA (95 aa).

In terms of processing, phosphorylated by CseC.

Its subcellular location is the cytoplasm. Functionally, member of the two-component regulatory system CseB/CseC involved in the stability of the cell envelope. CseB activates transcription of RNA polymerase sigma-E factor, in response to changes in the cell envelope. The polypeptide is Transcriptional regulatory protein CseB (cseB) (Streptomyces coelicolor (strain ATCC BAA-471 / A3(2) / M145)).